The primary structure comprises 449 residues: Ribulose bisphosphate carboxylase large chain (449 aa).

A propeptide spanning residues 1–2 is cleaved from the precursor; the sequence is MS. Position 3 is an N-acetylproline (Pro3). Lys14 is modified (N6,N6,N6-trimethyllysine). Residues Asn123 and Thr173 each contribute to the substrate site. Residue Lys175 is the Proton acceptor of the active site. Lys177 is a binding site for substrate. Mg(2+)-binding residues include Lys201, Asp203, and Glu204. Lys201 bears the N6-carboxylysine mark. His294 (proton acceptor) is an active-site residue. Residues Arg295, His327, and Ser379 each coordinate substrate.

It belongs to the RuBisCO large chain family. Type I subfamily. As to quaternary structure, heterohexadecamer of 8 large chains and 8 small chains; disulfide-linked. The disulfide link is formed within the large subunit homodimers. Mg(2+) serves as cofactor. The disulfide bond which can form in the large chain dimeric partners within the hexadecamer appears to be associated with oxidative stress and protein turnover.

It localises to the plastid. It is found in the chloroplast. The enzyme catalyses 2 (2R)-3-phosphoglycerate + 2 H(+) = D-ribulose 1,5-bisphosphate + CO2 + H2O. It carries out the reaction D-ribulose 1,5-bisphosphate + O2 = 2-phosphoglycolate + (2R)-3-phosphoglycerate + 2 H(+). Its function is as follows. RuBisCO catalyzes two reactions: the carboxylation of D-ribulose 1,5-bisphosphate, the primary event in carbon dioxide fixation, as well as the oxidative fragmentation of the pentose substrate in the photorespiration process. Both reactions occur simultaneously and in competition at the same active site. The polypeptide is Ribulose bisphosphate carboxylase large chain (Hippocratea richardiana).